A 298-amino-acid chain; its full sequence is Aspartate carbamoyltransferase catalytic subunit (298 aa).

2 residues coordinate carbamoyl phosphate: R50 and T51. Position 79 (K79) interacts with L-aspartate. Residues R100, H128, and Q131 each contribute to the carbamoyl phosphate site. L-aspartate contacts are provided by R160 and R221. The carbamoyl phosphate site is built by L260 and P261.

It belongs to the aspartate/ornithine carbamoyltransferase superfamily. ATCase family. In terms of assembly, heterooligomer of catalytic and regulatory chains.

It carries out the reaction carbamoyl phosphate + L-aspartate = N-carbamoyl-L-aspartate + phosphate + H(+). It functions in the pathway pyrimidine metabolism; UMP biosynthesis via de novo pathway; (S)-dihydroorotate from bicarbonate: step 2/3. In terms of biological role, catalyzes the condensation of carbamoyl phosphate and aspartate to form carbamoyl aspartate and inorganic phosphate, the committed step in the de novo pyrimidine nucleotide biosynthesis pathway. In Methanospirillum hungatei JF-1 (strain ATCC 27890 / DSM 864 / NBRC 100397 / JF-1), this protein is Aspartate carbamoyltransferase catalytic subunit.